A 203-amino-acid polypeptide reads, in one-letter code: ATP-dependent Clp protease proteolytic subunit 2 (203 aa).

S100 (nucleophile) is an active-site residue. Residue H125 is part of the active site.

It belongs to the peptidase S14 family. In terms of assembly, fourteen ClpP subunits assemble into 2 heptameric rings which stack back to back to give a disk-like structure with a central cavity, resembling the structure of eukaryotic proteasomes.

Its subcellular location is the cytoplasm. It catalyses the reaction Hydrolysis of proteins to small peptides in the presence of ATP and magnesium. alpha-casein is the usual test substrate. In the absence of ATP, only oligopeptides shorter than five residues are hydrolyzed (such as succinyl-Leu-Tyr-|-NHMec, and Leu-Tyr-Leu-|-Tyr-Trp, in which cleavage of the -Tyr-|-Leu- and -Tyr-|-Trp bonds also occurs).. In terms of biological role, cleaves peptides in various proteins in a process that requires ATP hydrolysis. Has a chymotrypsin-like activity. Plays a major role in the degradation of misfolded proteins. The sequence is that of ATP-dependent Clp protease proteolytic subunit 2 from Thermobifida fusca (strain YX).